We begin with the raw amino-acid sequence, 252 residues long: Cell division protein ZapD (252 aa).

The protein belongs to the ZapD family. As to quaternary structure, interacts with FtsZ.

It localises to the cytoplasm. Functionally, cell division factor that enhances FtsZ-ring assembly. Directly interacts with FtsZ and promotes bundling of FtsZ protofilaments, with a reduction in FtsZ GTPase activity. The chain is Cell division protein ZapD from Cupriavidus pinatubonensis (strain JMP 134 / LMG 1197) (Cupriavidus necator (strain JMP 134)).